Here is a 229-residue protein sequence, read N- to C-terminus: CRISPR pre-crRNA endoribonuclease Cas5d (229 aa).

It belongs to the CRISPR-associated protein Cas5 family. Subtype I-C/Dvulg subfamily. Requires Does not require a metal cofactor. as cofactor.

Its function is as follows. CRISPR (clustered regularly interspaced short palindromic repeat) is an adaptive immune system that provides protection against mobile genetic elements (viruses, transposable elements and conjugative plasmids). CRISPR clusters contain spacers, sequences complementary to antecedent mobile elements, and target invading nucleic acids. CRISPR clusters are transcribed and processed into CRISPR RNA (crRNA). This protein is a sequence-specific endonuclease that cleaves pre-crRNA into mature crRNA, possibly by an intramolecular attack of the 2'-hydroxyl group of G26 on the scissile phosphodiester, cutting the precursor 3' to G26 residue yielding 5'-hydroxyl and 2' and/or 3' ends lacking a hydroxyl group (perhaps a 2'/3' cyclic phosphodiester). Requires between 4 and 8 nt downstream of the cleavage site for both binding and cleavage of pre-crRNA. Substitution with dG at this position abolishes cleavage but not RNA binding. Does not cleave pre-crRNA associated with the M.succiniciproducens strain MBEL55E Cas5 protein (AC Q65TW5) CRISPR locus. This chain is CRISPR pre-crRNA endoribonuclease Cas5d, found in Thermus thermophilus (strain ATCC BAA-163 / DSM 7039 / HB27).